A 92-amino-acid chain; its full sequence is Small ribosomal subunit protein uS19 (92 aa).

It belongs to the universal ribosomal protein uS19 family.

In terms of biological role, protein S19 forms a complex with S13 that binds strongly to the 16S ribosomal RNA. The chain is Small ribosomal subunit protein uS19 from Shewanella amazonensis (strain ATCC BAA-1098 / SB2B).